The sequence spans 689 residues: Glycine--tRNA ligase beta subunit (689 aa).

It belongs to the class-II aminoacyl-tRNA synthetase family. As to quaternary structure, tetramer of two alpha and two beta subunits.

Its subcellular location is the cytoplasm. It carries out the reaction tRNA(Gly) + glycine + ATP = glycyl-tRNA(Gly) + AMP + diphosphate. This is Glycine--tRNA ligase beta subunit from Shewanella sediminis (strain HAW-EB3).